The primary structure comprises 289 residues: E3 ubiquitin-protein ligase MARCHF1 (289 aa).

The tract at residues 1–66 (MLGWCEAIAR…SPTTGTAPRS (66 aa)) is responsible for low stability. Residues 13 to 69 (HRIPNNTRTPEISGDLADASQTSTLNEKSPGRSASRSSNISKASSPTTGTAPRSQSR) form a disordered region. Over residues 43 to 58 (GRSASRSSNISKASSP) the composition is skewed to low complexity. Residues 59–69 (TTGTAPRSQSR) are compositionally biased toward polar residues. The RING-CH-type zinc-finger motif lies at 72 to 133 (VCPSTQDICR…ELCKYDFIME (62 aa)). Zn(2+) contacts are provided by Cys80, Cys83, Cys97, Cys99, His107, Cys110, Cys123, and Cys126. 2 helical membrane-spanning segments follow: residues 155–175 (IFCS…SLYV) and 197–217 (FWTK…FMYV). Residues 222–279 (YVQLWRRLKAYNRVIFVQNCPDTAKKLEKNFSCNVNTDIKDAVVVPVPQTGANSLPSA) are responsible for down-regulation of CD86 and MHC class II cell surface expression.

Interacts with CD83; this interaction antagonizes MARCHF1-mediated MHC II and CD86 down-regulation. In terms of processing, ubiquitinated via ubiquitin-conjugating enzyme E2 D1/UBE2D1 independently of lysines, leading to proteolytic degradation. Post-translationally, has a short half-life. Instability/short half-life permits rapid changes that allow efficient induction of antigen presentation once antigen presenting cells, APCs, receive maturation signals. Small changes in protein levels significantly alter the cell surface display of MHC class II proteins. In terms of tissue distribution, expressed in antigen presenting cells, APCs, located in lymph nodes and spleen. Also expressed in lung. Expression is high in follicular B-cells, moderate in dendritic cells and low in splenic T-cells.

The protein resides in the golgi apparatus. Its subcellular location is the trans-Golgi network membrane. The protein localises to the lysosome membrane. It is found in the cytoplasmic vesicle membrane. It localises to the late endosome membrane. The protein resides in the early endosome membrane. Its subcellular location is the cell membrane. The enzyme catalyses S-ubiquitinyl-[E2 ubiquitin-conjugating enzyme]-L-cysteine + [acceptor protein]-L-lysine = [E2 ubiquitin-conjugating enzyme]-L-cysteine + N(6)-ubiquitinyl-[acceptor protein]-L-lysine.. Its pathway is protein modification; protein ubiquitination. Functionally, E3 ubiquitin-protein ligase that mediates ubiquitination of TFRC, CD86, FAS and MHC class II proteins, such as HLA-DR alpha and beta, and promotes their subsequent endocytosis and sorting to lysosomes via multivesicular bodies. By constitutively ubiquitinating MHC class II proteins in immature dendritic cells, down-regulates their cell surface localization thus sequestering them in the intracellular endosomal system. Also regulates insulin sensitivity by controlling surface expression of the insulin receptor subunit beta/INSR by direct ubiquitination and degradation. In terms of biological role, (Microbial infection) Plays a role in iron metabolism by regulating the levels of the transferrin receptor TFRC during human cytomegalovirus infection, subsequently contributing to a proviral effect. The polypeptide is E3 ubiquitin-protein ligase MARCHF1 (Homo sapiens (Human)).